The sequence spans 478 residues: NADH-quinone oxidoreductase subunit N 1 (478 aa).

The next 14 membrane-spanning stretches (helical) occupy residues 6–26, 33–53, 71–91, 99–119, 121–141, 156–176, 193–212, 244–264, 265–285, 299–319, 321–341, 364–384, 388–408, and 438–458; these read TVLPILFLAIAGMIMLMSGVF, FAITAASIVVLAIAARLLVAA, FADVLVALGAIGALALSVTFN, FEFPVLVLFAVTGMVVLVSAS, LITLYIGFEIQSLALYVLAAF, FVLGALSSGLLLYGISLVYGF, PTAAVGSTIGLVFVLVGLAF, IAVFALLLRVMLGPFGPVLGQ, WRDLVQIIAAASMVIGAIGAI, IGHMGYALMGLAAGTAAGVSG, LIYLAIYLVMSLGTFGCIIAM, FAFVLAVMMWSMAGIPPLAGF, FYVFAAAINAGLGPLAVLGII, and AGVSLVMGAAAAFTVLFVFHP.

It belongs to the complex I subunit 2 family. NDH-1 is composed of 14 different subunits. Subunits NuoA, H, J, K, L, M, N constitute the membrane sector of the complex.

It localises to the cell inner membrane. It carries out the reaction a quinone + NADH + 5 H(+)(in) = a quinol + NAD(+) + 4 H(+)(out). NDH-1 shuttles electrons from NADH, via FMN and iron-sulfur (Fe-S) centers, to quinones in the respiratory chain. The immediate electron acceptor for the enzyme in this species is believed to be ubiquinone. Couples the redox reaction to proton translocation (for every two electrons transferred, four hydrogen ions are translocated across the cytoplasmic membrane), and thus conserves the redox energy in a proton gradient. The polypeptide is NADH-quinone oxidoreductase subunit N 1 (Acidiphilium cryptum (strain JF-5)).